Here is a 465-residue protein sequence, read N- to C-terminus: GTPase Der (465 aa).

2 consecutive EngA-type G domains span residues 3–166 and 184–358; these read FLVA…LNEY and IHFS…ACAN. GTP-binding positions include 9-16, 56-60, 118-121, 190-197, 237-241, and 302-305; these read GRANVGKS, DTGGI, NKVD, GRPNVGKS, DTAGV, and NKWD. Positions 359–443 constitute a KH-like domain; sequence KKITTADATC…PIVFEFKQSE (85 aa). Positions 446–465 are disordered; the sequence is FADRKNKRSKDEGSKSKKVK.

Belongs to the TRAFAC class TrmE-Era-EngA-EngB-Septin-like GTPase superfamily. EngA (Der) GTPase family. In terms of assembly, associates with the 50S ribosomal subunit.

Its function is as follows. GTPase that plays an essential role in the late steps of ribosome biogenesis. The protein is GTPase Der of Francisella tularensis subsp. mediasiatica (strain FSC147).